The primary structure comprises 212 residues: MAIGLIGRKVGMTRIFNEDGASVPVTVIEIAANRVTQVRTLDTDGYRALQVTTGTKKANRITKPEAGHFAKAGVEAGRGLWEMRLADGEGEGIEVGAELNVDIFADIAKVDVTGQSKGKGFQGGIKRWNFAMQDATHGNSLAHRSNGSIGQNQTPGRVFKGKKMSGHMGAERVTTQNLEVIRVDAERNLLLVKGAVPGATNGDLIIKPAVKA.

Residue Q153 is modified to N5-methylglutamine.

This sequence belongs to the universal ribosomal protein uL3 family. As to quaternary structure, part of the 50S ribosomal subunit. Forms a cluster with proteins L14 and L19. Methylated by PrmB.

In terms of biological role, one of the primary rRNA binding proteins, it binds directly near the 3'-end of the 23S rRNA, where it nucleates assembly of the 50S subunit. The chain is Large ribosomal subunit protein uL3 from Shewanella halifaxensis (strain HAW-EB4).